Here is a 73-residue protein sequence, read N- to C-terminus: MKLTCVLIIAVLFLTACQLVTADYSGDEQQYRAMRLIDAMRNFGDTRSCGRRGKPCPCCRGFRCTGSFCRKWQ.

The N-terminal stretch at methionine 1–alanine 22 is a signal peptide. Positions aspartate 23 to arginine 47 are excised as a propeptide. Disulfide bonds link cysteine 49/cysteine 59, cysteine 56/cysteine 64, and cysteine 58/cysteine 69.

This sequence belongs to the conotoxin O1 superfamily. As to expression, expressed by the venom duct.

Its subcellular location is the secreted. The polypeptide is Conotoxin Leo-O2 (Conus leopardus (Leopard cone)).